Consider the following 479-residue polypeptide: GTPase Obg (479 aa).

The region spanning 2 to 159 (PRFVDRVVIH…RDLTLELKTV (158 aa)) is the Obg domain. Positions 160–340 (ADVGLVGFPS…LIFGLWQMVS (181 aa)) constitute an OBG-type G domain. Residues 166-173 (GFPSAGKS), 191-195 (FTTLV), 212-215 (DVPG), 292-295 (NKID), and 321-323 (STV) each bind GTP. Positions 173 and 193 each coordinate Mg(2+). The OCT domain maps to 358-436 (PVPVDDSGFD…IGEMTFDWEP (79 aa)). Residues 438-479 (TPAGGHVAMSGRGTDVRLERSDRVGAAERKAARRQRRERDDD) form a disordered region. Basic and acidic residues predominate over residues 451–467 (TDVRLERSDRVGAAERK).

It belongs to the TRAFAC class OBG-HflX-like GTPase superfamily. OBG GTPase family. Monomer. Mg(2+) serves as cofactor.

The protein resides in the cytoplasm. In terms of biological role, an essential GTPase which binds GTP, GDP and possibly (p)ppGpp with moderate affinity, with high nucleotide exchange rates and a fairly low GTP hydrolysis rate. Plays a role in control of the cell cycle, stress response, ribosome biogenesis and in those bacteria that undergo differentiation, in morphogenesis control. In Mycobacterium ulcerans (strain Agy99), this protein is GTPase Obg.